A 337-amino-acid chain; its full sequence is Anthranilate phosphoribosyltransferase (337 aa).

5-phospho-alpha-D-ribose 1-diphosphate-binding positions include G78, 81–82, T86, 88–91, 106–114, and S118; these read GD, NIST, and KHGNRSVSS. G78 is a binding site for anthranilate. Residue S90 coordinates Mg(2+). N109 contacts anthranilate. Position 164 (R164) interacts with anthranilate. 2 residues coordinate Mg(2+): D222 and E223.

Belongs to the anthranilate phosphoribosyltransferase family. In terms of assembly, homodimer. Requires Mg(2+) as cofactor.

It catalyses the reaction N-(5-phospho-beta-D-ribosyl)anthranilate + diphosphate = 5-phospho-alpha-D-ribose 1-diphosphate + anthranilate. It functions in the pathway amino-acid biosynthesis; L-tryptophan biosynthesis; L-tryptophan from chorismate: step 2/5. Catalyzes the transfer of the phosphoribosyl group of 5-phosphorylribose-1-pyrophosphate (PRPP) to anthranilate to yield N-(5'-phosphoribosyl)-anthranilate (PRA). This Idiomarina loihiensis (strain ATCC BAA-735 / DSM 15497 / L2-TR) protein is Anthranilate phosphoribosyltransferase.